The chain runs to 916 residues: Translation initiation factor IF-2 (916 aa).

The tract at residues 58 to 317 (LEAEGHLPGA…GVTVPRGDGG (260 aa)) is disordered. The span at 120 to 142 (EKVAASEAADAKPAAGAPADTAK) shows a compositional bias: low complexity. The span at 195–206 (SNIPRPAPPRPG) shows a compositional bias: pro residues. Composition is skewed to gly residues over residues 214 to 227 (RPGGGQRQGGGGRP) and 235 to 282 (SAGG…GRGG). Residues 283-294 (GKSKARKSKRAK) are compositionally biased toward basic residues. The tr-type G domain occupies 409–583 (IRPPVVTVMG…LTADAGLDLR (175 aa)). Residues 418 to 425 (GHVDHGKT) are G1. A GTP-binding site is contributed by 418–425 (GHVDHGKT). The segment at 443 to 447 (GITQH) is G2. Positions 468–471 (DTPG) are G3. Residues 468 to 472 (DTPGH) and 522 to 525 (NKVD) each bind GTP. The segment at 522–525 (NKVD) is G4. Residues 558–560 (SAR) form a G5 region.

Belongs to the TRAFAC class translation factor GTPase superfamily. Classic translation factor GTPase family. IF-2 subfamily.

It is found in the cytoplasm. Functionally, one of the essential components for the initiation of protein synthesis. Protects formylmethionyl-tRNA from spontaneous hydrolysis and promotes its binding to the 30S ribosomal subunits. Also involved in the hydrolysis of GTP during the formation of the 70S ribosomal complex. The sequence is that of Translation initiation factor IF-2 from Leifsonia xyli subsp. xyli (strain CTCB07).